The sequence spans 130 residues: Small ribosomal subunit protein uS8 (130 aa).

Belongs to the universal ribosomal protein uS8 family. In terms of assembly, component of the small ribosomal subunit (SSU). Mature N.crassa ribosomes consist of a small (40S) and a large (60S) subunit. The 40S small subunit contains 1 molecule of ribosomal RNA (18S rRNA) and at least 32 different proteins. The large 60S subunit contains 3 rRNA molecules (26S, 5.8S and 5S rRNA) and at least 42 different proteins.

It is found in the cytoplasm. Component of the ribosome, a large ribonucleoprotein complex responsible for the synthesis of proteins in the cell. The small ribosomal subunit (SSU) binds messenger RNAs (mRNAs) and translates the encoded message by selecting cognate aminoacyl-transfer RNA (tRNA) molecules. The large subunit (LSU) contains the ribosomal catalytic site termed the peptidyl transferase center (PTC), which catalyzes the formation of peptide bonds, thereby polymerizing the amino acids delivered by tRNAs into a polypeptide chain. The nascent polypeptides leave the ribosome through a tunnel in the LSU and interact with protein factors that function in enzymatic processing, targeting, and the membrane insertion of nascent chains at the exit of the ribosomal tunnel. The chain is Small ribosomal subunit protein uS8 (crp-27) from Neurospora crassa (strain ATCC 24698 / 74-OR23-1A / CBS 708.71 / DSM 1257 / FGSC 987).